A 1408-amino-acid chain; its full sequence is DNA-directed RNA polymerase subunit beta' (1408 aa).

Positions 70, 72, 85, and 88 each coordinate Zn(2+). Mg(2+)-binding residues include aspartate 460, aspartate 462, and aspartate 464. Residues cysteine 822, cysteine 896, cysteine 903, and cysteine 906 each coordinate Zn(2+). Positions 1386–1408 are disordered; that stretch reads DTGEAPPLSEEETGEIRNSGYAV.

It belongs to the RNA polymerase beta' chain family. In terms of assembly, the RNAP catalytic core consists of 2 alpha, 1 beta, 1 beta' and 1 omega subunit. When a sigma factor is associated with the core the holoenzyme is formed, which can initiate transcription. The cofactor is Mg(2+). Zn(2+) is required as a cofactor.

It carries out the reaction RNA(n) + a ribonucleoside 5'-triphosphate = RNA(n+1) + diphosphate. Functionally, DNA-dependent RNA polymerase catalyzes the transcription of DNA into RNA using the four ribonucleoside triphosphates as substrates. The chain is DNA-directed RNA polymerase subunit beta' from Nitrosospira multiformis (strain ATCC 25196 / NCIMB 11849 / C 71).